The sequence spans 443 residues: Intermediate filament protein ifd-2 (443 aa).

Residues 1-58 (MTDPLNPTRLQNHPALARIIESGRTNLPTGITTSGALSAYAQNAAAIIRDNREREKVE) are head. Residues 55 to 405 (EKVEIADLNN…KLMENAEHLR (351 aa)) form the IF rod domain. The segment at 59–90 (IADLNNRLARYVEKVRFLEAQNRVLENDIGVF) is coil 1A. Residues 91–104 (RNAAHTHSERIAVY) form a linker 1 region. The tract at residues 105–239 (FESEKASLFT…SQHDIAIREE (135 aa)) is coil 1B. Residues 240–257 (ISKARRDTTNKNRDYFHN) are linker 12. The tract at residues 258–403 (ELHAAMKEIR…YRKLMENAEH (146 aa)) is coil 2. The tail stretch occupies residues 404-443 (LRTTVQTHVTYNAPPPPLPQSGPRTTSYHAYGSAYNDSLL).

It belongs to the intermediate filament family.

The protein localises to the cytoplasm. In terms of biological role, cytoplasmic intermediate filaments provide mechanical strength to cells. Not essential protein. The chain is Intermediate filament protein ifd-2 (ifd-2) from Caenorhabditis elegans.